A 416-amino-acid chain; its full sequence is Keratin, type I cuticular Ha1 (416 aa).

The head stretch occupies residues Pro2–Glu56. An IF rod domain is found at Glu56–Leu367. Residues Lys57–Arg91 are coil 1A. A linker 1 region spans residues Asn92 to Ala102. Positions Tyr103–Cys203 are coil 1B. A linker 12 region spans residues Gln204–Val219. The segment at Asp220–Glu363 is coil 2. The segment at Asp364–Arg416 is tail.

This sequence belongs to the intermediate filament family.

This is Keratin, type I cuticular Ha1 (Krt31) from Mus musculus (Mouse).